A 414-amino-acid chain; its full sequence is Serine/threonine transporter SstT (414 aa).

Topologically, residues 2-15 are cytoplasmic; that stretch reads TTQRSPGLFRRLAH. The helical transmembrane segment at 16-36 threads the bilayer; that stretch reads GSLVKQILVGLVLGILLAWIS. Residues 37-45 are Periplasmic-facing; sequence KPAAEAVGL. Residues 46-66 form a helical membrane-spanning segment; that stretch reads LGTLFVGALKAVAPILVLMLV. At 67 to 83 the chain is on the cytoplasmic side; the sequence is MASIANHQHGQKTNILP. Residues 84–104 form a helical membrane-spanning segment; that stretch reads ILFLYLLGTFSAALAAVVFSF. The Periplasmic segment spans residues 105 to 142; sequence AFPSTLHLSSSAGDISPPSGIVEVMRGLVMSMVSNPID. Residues 143–163 form a helical membrane-spanning segment; that stretch reads ALLKGNYIGILVWAIGLGFAL. Residues 164-179 lie on the Cytoplasmic side of the membrane; sequence RHGNETTKNLVNDMSN. The chain crosses the membrane as a helical span at residues 180 to 200; that stretch reads AVTFMVKLVIRFAPIGIFGLV. Topologically, residues 201-217 are periplasmic; that stretch reads SSTLATTGFSTLWGYAQ. A helical membrane pass occupies residues 218 to 238; it reads LLVVLVGCMLLVALVVNPLLV. Residues 239-299 lie on the Cytoplasmic side of the membrane; that stretch reads WWKIRRNPFP…VSIPLGATIN (61 aa). A helical membrane pass occupies residues 300–320; that stretch reads MAGAAITITVLTLAAVNTLGI. The Periplasmic portion of the chain corresponds to 321–331; the sequence is PVDLPTALLLS. The chain crosses the membrane as a helical span at residues 332–352; it reads VVASLCACGASGVAGGSLLLI. Residues 353-414 lie on the Cytoplasmic side of the membrane; it reads PLACNMFGIS…DRLANSALRN (62 aa).

The protein belongs to the dicarboxylate/amino acid:cation symporter (DAACS) (TC 2.A.23) family.

Its subcellular location is the cell inner membrane. It carries out the reaction L-serine(in) + Na(+)(in) = L-serine(out) + Na(+)(out). It catalyses the reaction L-threonine(in) + Na(+)(in) = L-threonine(out) + Na(+)(out). In terms of biological role, involved in the import of serine and threonine into the cell, with the concomitant import of sodium (symport system). This Shigella dysenteriae serotype 1 (strain Sd197) protein is Serine/threonine transporter SstT.